Consider the following 331-residue polypeptide: Olfactory receptor 6K3 (331 aa).

Over 1-41 (MCWTMPSPFTGSSTRNMESGNQSTVTEFIFTGFPQLQDGSL) the chain is Extracellular. N-linked (GlcNAc...) asparagine glycosylation is present at asparagine 21. A helical transmembrane segment spans residues 42–62 (LYFFPLLFIYTFIIIDNLLIF). The Cytoplasmic segment spans residues 63 to 70 (SAVRLDTH). Residues 71–91 (LHNPMYNFISIFSFLEIWYTT) form a helical membrane-spanning segment. The Extracellular portion of the chain corresponds to 92–115 (ATIPKMLSNLISEKKAISMTGCIL). Cysteine 113 and cysteine 205 are oxidised to a cystine. Residues 116–136 (QMYFFHSLENSEGILLTTMAI) traverse the membrane as a helical segment. Residues 137–155 (DRYVAICNPLRYQMIMTPR) are Cytoplasmic-facing. The helical transmembrane segment at 156 to 176 (LCAQLSAGSCLFGFLILLPEI) threads the bilayer. Topologically, residues 177 to 212 (VMISTLPFCGPNQIHQIFCDLVPVLSLACTDTSMIL) are extracellular. A helical membrane pass occupies residues 213-232 (IEDVIHAVTIIITFLIIALS). The Cytoplasmic segment spans residues 233–252 (YVRIVTVILRIPSSEGRQKA). The helical transmembrane segment at 253–273 (FSTCAGHLMVFPIFFGSVSLM) threads the bilayer. The Extracellular portion of the chain corresponds to 274–286 (YLRFSDTYPPVLD). The chain crosses the membrane as a helical span at residues 287–307 (TAIALMFTVLAPFFNPIIYSL). Over 308-331 (RNKDMNNAIKKLFCLQKVLNKPGG) the chain is Cytoplasmic.

Belongs to the G-protein coupled receptor 1 family.

Its subcellular location is the cell membrane. In terms of biological role, odorant receptor. In Homo sapiens (Human), this protein is Olfactory receptor 6K3 (OR6K3).